The following is a 361-amino-acid chain: MKFGWVNVIGDNWEEKKKIVTTALESSIPVVVAEPEDIEKIKELGNIKVASHSLDADIVLVNKNDNIEFLKEAKNLGKETAIYIPIESKEDEEFASEVARFGFVDNIILEGRDWTIIPLENLIADLFHRDVKIVASVNSVDEAKVAYEILEKGTDGVLLNPKNLEDIKELSKLIEEMNKEKVALDVATVTKVEPIGSGDRVCIDTCSLMKIGEGMLIGSYSRALFLVHSETVENPYVATRPFRVNAGPVHAYILCPGNKTKYLSELKAGDKVLIVDKDGNTREAIVGRVKIERRPLVLIEAEYKGDIIRTILQNAETIRLVNEKGEPISVVDLKPGDKVLIKPEEYARHFGMAIKETIIEK.

This sequence belongs to the archaeal-type DHQ synthase family.

The catalysed reaction is 2-amino-2,3,7-trideoxy-D-lyxo-hept-6-ulosonate + NAD(+) + H2O = 3-dehydroquinate + NH4(+) + NADH + H(+). In terms of biological role, catalyzes the oxidative deamination and cyclization of 2-amino-3,7-dideoxy-D-threo-hept-6-ulosonic acid (ADH) to yield 3-dehydroquinate (DHQ), which is fed into the canonical shikimic pathway of aromatic amino acid biosynthesis. The sequence is that of 3-dehydroquinate synthase (aroB') from Methanocaldococcus jannaschii (strain ATCC 43067 / DSM 2661 / JAL-1 / JCM 10045 / NBRC 100440) (Methanococcus jannaschii).